The primary structure comprises 442 residues: Mimosinase, chloroplastic (442 aa).

The transit peptide at 1–35 (MALPSAFLNPFVPSPVTANPRTKFARVGKGFNVSC) directs the protein to the chloroplast. Pyridoxal 5'-phosphate is bound by residues Y103, R105, G133, M134, S252, and T254. K255 is modified (N6-(pyridoxal phosphate)lysine).

It belongs to the trans-sulfuration enzymes family. In terms of assembly, forms homodimers. May form homotetramers from two homodimers. Requires pyridoxal 5'-phosphate as cofactor.

It is found in the plastid. It localises to the chloroplast. It carries out the reaction L-mimosine + H2O = 3-hydroxy-4H-pyrid-4-one + pyruvate + NH4(+). The catalysed reaction is L,L-cystathionine + H2O = L-homocysteine + pyruvate + NH4(+). The enzyme catalyses an S-substituted L-cysteine + H2O = a thiol + pyruvate + NH4(+). Functionally, catalyzes the degradation of mimosine, which is a toxic secondary metabolite found in all Mimosa and Leucaena species. Catalyzes the degradation of cystathionine, but seems to have lower preference toward cystathionine over mimosine. The protein is Mimosinase, chloroplastic of Mimosa pudica (Sensitive plant).